The following is a 206-amino-acid chain: MPLRDDGVLRGSLVLAVFTLFGLGLAYSLIATGITGALFSEQATGSLMRVDARVVGSALVAQPFTDARYFQPRPSAAKYDLTAAAGSNQARSNPDLLARIATTRAQVAARDGIAPEAVPGELLTQSGSGLDPHLSPAGAQVQIRRVAAARGWPEQRVAALVQATTEAAPQFGLLGQPRVNVLALNLALDQAGNGESGRGNGVKQAH.

A helical membrane pass occupies residues 14-34; it reads VLAVFTLFGLGLAYSLIATGI.

The protein belongs to the KdpC family. As to quaternary structure, the system is composed of three essential subunits: KdpA, KdpB and KdpC.

It localises to the cell inner membrane. Functionally, part of the high-affinity ATP-driven potassium transport (or Kdp) system, which catalyzes the hydrolysis of ATP coupled with the electrogenic transport of potassium into the cytoplasm. This subunit acts as a catalytic chaperone that increases the ATP-binding affinity of the ATP-hydrolyzing subunit KdpB by the formation of a transient KdpB/KdpC/ATP ternary complex. The polypeptide is Potassium-transporting ATPase KdpC subunit (Xanthomonas axonopodis pv. citri (strain 306)).